We begin with the raw amino-acid sequence, 192 residues long: Cytochrome b-245 light chain (192 aa).

Residues 2-7 are Cytoplasmic-facing; it reads GQIEWA. Residues 8–30 traverse the membrane as a helical segment; the sequence is MWANEQALASGLILITGGIVATA. The Extracellular segment spans residues 31 to 35; it reads GQFAQ. The chain crosses the membrane as a helical span at residues 36 to 53; it reads WYLGAYSIAAGVLICLLE. Residues 54–69 lie on the Cytoplasmic side of the membrane; the sequence is YPRGKRSKGSTMERCG. The stretch at 70 to 80 is an intramembrane region; that stretch reads QKYLTRAVKVF. The Cytoplasmic portion of the chain corresponds to 81 to 86; that stretch reads GPLTSN. A helical membrane pass occupies residues 87–104; it reads YYIRAFLHLGLSVPAGFL. A topological domain (extracellular) is located at residue Leu105. A helical transmembrane segment spans residues 106-126; it reads ATILGTACLAIASSIYLLAAI. The Cytoplasmic portion of the chain corresponds to 127 to 192; sequence HGEHWTPIET…NPMPVTDEVV (66 aa). The disordered stretch occupies residues 134 to 192; the sequence is IETKPKERPQVGGTIKQPPSNPPPRPPAEARKKPSEEEVAGVPGGGPQENPMPVTDEVV. At Thr147 the chain carries Phosphothreonine. Residue Lys149 forms a Glycyl lysine isopeptide (Lys-Gly) (interchain with G-Cter in ubiquitin) linkage. Ser168 carries the phosphoserine modification.

Belongs to the p22phox family. Component of the phagocyte NADPH oxidase core complex/cytochrome b558 complex, composed of CYBB (heavy chain (beta)) and CYBA (light chain (alpha)). Component of the phagocyte NADPH oxidase complex composed of an obligatory core heterodimer formed by the membrane proteins CYBA and CYBB and the cytosolic regulatory subunits NCF1/p47-phox, NCF2/p67-phox, NCF4/p40-phox and the small GTPase RAC1 or RAC2. Interacts with NCF1 (via SH3 domain). Interacts with SH3PXD2A. Interacts with DUOX1, DUOX2 and TPO. Interacts with NOX4; this interaction mediates superoxide generation. Interacts with calprotectin (S100A8/9). Interacts with GBP7. Interacts with NOXO1. Forms a heterodimer with NOX3 and is essential for activity and cell membrane localization of NOX3. Interacts with NOX1. Phosphorylation at Thr-147 enhances NADPH oxidase activity by promoting NCF1/p47-phox binding. Post-translationally, ubiquitinated at Lys-149 likely by RNF145.

The protein localises to the cell membrane. Its function is as follows. Subunit of NADPH oxidase complexes that is required for the NADPH oxidase activity that generates, in various cell types, superoxide from molecular oxygen utilizing NADPH as an electron donor. Subunit of the phagocyte NADPH oxidase complex that mediates the transfer of electrons from cytosolic NADPH to O2 to produce the superoxide anion (O2(-)). In the activated complex, electrons are first transferred from NADPH to flavin adenine dinucleotide (FAD) and subsequently transferred via two heme molecules to molecular oxygen, producing superoxide through an outer-sphere reaction. Activation of the NADPH oxidase complex is initiated by the assembly of cytosolic subunits of the NADPH oxidase complex with the core NADPH oxidase complex to form a complex at the plasma membrane or phagosomal membrane. This activation process is initiated by phosphorylation dependent binding of the cytosolic NCF1/p47-phox subunit to the C-terminus of CYBA/p22-phox. Aassociates with NOX3 to form a functional NADPH oxidase constitutively generating superoxide. This is Cytochrome b-245 light chain from Tursiops truncatus (Atlantic bottle-nosed dolphin).